Here is a 353-residue protein sequence, read N- to C-terminus: GDSL esterase/lipase APG (353 aa).

Positions 1-25 are cleaved as a signal peptide; that stretch reads MDRCTSSFLLLTLVSTLSILQISFA. S37 serves as the catalytic Nucleophile. N197 and N320 each carry an N-linked (GlcNAc...) asparagine glycan. Active-site residues include D328 and H331.

It belongs to the 'GDSL' lipolytic enzyme family.

It localises to the secreted. This is GDSL esterase/lipase APG (APG) from Arabidopsis thaliana (Mouse-ear cress).